The following is a 912-amino-acid chain: Type II beta methyltransferase M.BslI (912 aa).

It belongs to the N(4)/N(6)-methyltransferase family. N(4) subfamily.

The catalysed reaction is a 2'-deoxycytidine in DNA + S-adenosyl-L-methionine = an N(4)-methyl-2'-deoxycytidine in DNA + S-adenosyl-L-homocysteine + H(+). A beta subtype methylase. Recognizes the double-stranded sequence 5'-CCN(7)GG-3', methylates C-2 on both strands, and protects the DNA from cleavage by the BslI endonuclease. The sequence is that of Type II beta methyltransferase M.BslI (bslIM) from Bacillus sp. (strain NEB-606).